Consider the following 148-residue polypeptide: Protein Turandot Z (148 aa).

The signal sequence occupies residues 1–23 (MYFAIRLSFVLAVLFCLTGNGSA).

Belongs to the Turandot family.

The protein resides in the secreted. Functionally, a humoral factor that may play a role in stress tolerance. This chain is Protein Turandot Z, found in Drosophila sechellia (Fruit fly).